A 129-amino-acid chain; its full sequence is Small ribosomal subunit protein uS11 (129 aa).

The protein belongs to the universal ribosomal protein uS11 family. In terms of assembly, part of the 30S ribosomal subunit. Interacts with proteins S7 and S18. Binds to IF-3.

Its function is as follows. Located on the platform of the 30S subunit, it bridges several disparate RNA helices of the 16S rRNA. Forms part of the Shine-Dalgarno cleft in the 70S ribosome. This chain is Small ribosomal subunit protein uS11, found in Caulobacter sp. (strain K31).